The sequence spans 492 residues: Variant surface glycoprotein MITAT 1.1 (492 aa).

Positions 1 to 32 (MATGRAKNTKWARWLSTAGLIIVVTLPATTMA) are cleaved as a signal peptide. 2 disulfide bridges follow: cysteine 47/cysteine 177 and cysteine 155/cysteine 222. Asparagine 298 and asparagine 471 each carry an N-linked (GlcNAc...) asparagine glycan. Residue serine 475 is the site of GPI-anchor amidated serine attachment. A propeptide spans 476–492 (NSFLIHKAPLLLAFLLF) (removed in mature form).

It is found in the cell membrane. In terms of biological role, VSG forms a coat on the surface of the parasite. The trypanosome evades the immune response of the host by expressing a series of antigenically distinct VSGs from an estimated 1000 VSG genes. The protein is Variant surface glycoprotein MITAT 1.1 of Trypanosoma brucei brucei.